The primary structure comprises 365 residues: Peptide chain release factor 2 (365 aa).

Glutamine 252 carries the post-translational modification N5-methylglutamine.

This sequence belongs to the prokaryotic/mitochondrial release factor family. Post-translationally, methylated by PrmC. Methylation increases the termination efficiency of RF2.

It localises to the cytoplasm. Peptide chain release factor 2 directs the termination of translation in response to the peptide chain termination codons UGA and UAA. The polypeptide is Peptide chain release factor 2 (Aeromonas hydrophila subsp. hydrophila (strain ATCC 7966 / DSM 30187 / BCRC 13018 / CCUG 14551 / JCM 1027 / KCTC 2358 / NCIMB 9240 / NCTC 8049)).